A 161-amino-acid polypeptide reads, in one-letter code: Ribonuclease H (161 aa).

In terms of domain architecture, RNase H type-1 spans 12-155 (QPQHVVIYTD…ADALANKGVE (144 aa)). Mg(2+)-binding residues include aspartate 21, glutamate 59, aspartate 81, and aspartate 147.

Belongs to the RNase H family. Monomer. Mg(2+) is required as a cofactor.

It localises to the cytoplasm. It catalyses the reaction Endonucleolytic cleavage to 5'-phosphomonoester.. Functionally, endonuclease that specifically degrades the RNA of RNA-DNA hybrids. The protein is Ribonuclease H of Polaromonas naphthalenivorans (strain CJ2).